The primary structure comprises 307 residues: Protease HtpX homolog (307 aa).

The next 2 helical transmembrane spans lie at 7 to 27 and 28 to 48; these read AILL…IGGA and SGAT…YWNS. His-130 is a Zn(2+) binding site. Glu-131 is a catalytic residue. Residue His-134 participates in Zn(2+) binding. A run of 2 helical transmembrane segments spans residues 145–165 and 171–191; these read ITAT…FFGG and GPGI…AMLV. Glu-200 is a binding site for Zn(2+). Residues 277 to 307 are disordered; sequence AGQSGGGLAPGGPPPDPSSPWNKGSRRGPWG.

This sequence belongs to the peptidase M48B family. The cofactor is Zn(2+).

The protein resides in the cell inner membrane. The chain is Protease HtpX homolog from Nitrobacter winogradskyi (strain ATCC 25391 / DSM 10237 / CIP 104748 / NCIMB 11846 / Nb-255).